The primary structure comprises 132 residues: uncharacterized protein (132 aa).

The signal sequence occupies residues 1-18 (MRKIISMLFIPLFIFAMA).

This is an uncharacterized protein from Aquifex aeolicus (strain VF5).